We begin with the raw amino-acid sequence, 125 residues long: Small ribosomal subunit protein uS12 (125 aa).

D89 carries the post-translational modification 3-methylthioaspartic acid. The disordered stretch occupies residues 104–125 (LQGVKDRKQSRSKYGSKRPKKA). The segment covering 113-125 (SRSKYGSKRPKKA) has biased composition (basic residues).

It belongs to the universal ribosomal protein uS12 family. In terms of assembly, part of the 30S ribosomal subunit. Contacts proteins S8 and S17. May interact with IF1 in the 30S initiation complex.

Functionally, with S4 and S5 plays an important role in translational accuracy. Its function is as follows. Interacts with and stabilizes bases of the 16S rRNA that are involved in tRNA selection in the A site and with the mRNA backbone. Located at the interface of the 30S and 50S subunits, it traverses the body of the 30S subunit contacting proteins on the other side and probably holding the rRNA structure together. The combined cluster of proteins S8, S12 and S17 appears to hold together the shoulder and platform of the 30S subunit. This Leptothrix cholodnii (strain ATCC 51168 / LMG 8142 / SP-6) (Leptothrix discophora (strain SP-6)) protein is Small ribosomal subunit protein uS12.